The following is a 576-amino-acid chain: MAGUK p55 subfamily member 7 (576 aa).

L27 domains lie at 10-64 (CDMG…EKQN) and 65-122 (PLPI…YDPV). The PDZ domain maps to 139–220 (IIRLVKNSEP…AITFKIIPST (82 aa)). Positions 228–298 (EGKIFIKALF…PSKHFQERRL (71 aa)) constitute an SH3 domain. The phospho-regulated basic and hydrophobic (PRBH) motif stretch occupies residues 289–383 (PSKHFQERRL…VGPVGVGLNE (95 aa)). Positions 368 to 560 (YRLIVLVGPV…AFNELKTTFD (193 aa)) constitute a Guanylate kinase-like domain. Residue serine 409 is modified to Phosphoserine.

The protein belongs to the MAGUK family. In terms of assembly, heterodimer; able to heterodimerize via its C-terminal L27 domain with LIN7A, LIN7B and LIN7C. Forms a tripartite complex composed of DLG1, MPP7 and LIN7 (LIN7A or LIN7C). Interacts with DLG1 via its N-terminal L27 domain. Interacts with PALS1 and PATJ. Phosphorylated by aPKC which promotes dissociation from the cell cortex.

The protein localises to the membrane. Its subcellular location is the lateral cell membrane. It is found in the cell junction. The protein resides in the tight junction. It localises to the adherens junction. The protein localises to the cytoplasm. Its subcellular location is the cell cortex. Functionally, acts as an important adapter that promotes epithelial cell polarity and tight junction formation via its interaction with DLG1. Involved in the assembly of protein complexes at sites of cell-cell contact. In Mus musculus (Mouse), this protein is MAGUK p55 subfamily member 7 (Mpp7).